Consider the following 327-residue polypeptide: Clavesin-2 (327 aa).

The region spanning 96–257 is the CRAL-TRIO domain; that stretch reads IKQALKDGFP…EFGGMLPPYD (162 aa). The interval 289-327 is disordered; the sequence is DKELSPKSMKRSQSVVDPTALKRMDKSEEENMQPLLALD.

As to quaternary structure, forms a complex with clathrin heavy chain and gamma-adaptin.

It localises to the golgi apparatus. Its subcellular location is the trans-Golgi network membrane. It is found in the early endosome membrane. The protein localises to the cytoplasmic vesicle. The protein resides in the clathrin-coated vesicle. Required for normal morphology of late endosomes and/or lysosomes in neurons. Binds phosphatidylinositol 3,5-bisphosphate (PtdIns(3,5)P2). The polypeptide is Clavesin-2 (Clvs2) (Mus musculus (Mouse)).